Here is an 80-residue protein sequence, read N- to C-terminus: Serine rich endogenous peptide 15 (80 aa).

Positions 1–28 (MSKEKSYVIALLLSLLLCLSFQVGVSEA) are cleaved as a signal peptide. Short sequence motifs (SCOOP motif) lie at residues 32–46 (AVTT…CANG) and 66–80 (PRVA…GKGP). Residues 37 to 80 (YSDSPRCANGSSASPPTRHCPRGRPRPPTPRVAVHSNSTKGKGP) form a disordered region. Short sequence motifs (sxS motif essential for MIK2 binding) lie at residues 38–40 (SDS) and 72–74 (SNS). Polar residues predominate over residues 71-80 (HSNSTKGKGP).

The protein belongs to the serine rich endogenous peptide (SCOOP) phytocytokine family. In terms of assembly, interacts with MIK2 (via extracellular leucine-rich repeat domain); this interaction triggers the formation of complex between MIK2 and the BAK1/SERK3 and SERK4 coreceptors, and subsequent BAK1 activation by phosphorylation. As to expression, mostly expressed in leaves, and, to a lower extent, in seedlings shoots, roots, stems, siliques, seeds and flowers.

The protein resides in the cell membrane. The protein localises to the secreted. It localises to the extracellular space. Its subcellular location is the apoplast. It is found in the endoplasmic reticulum. The protein resides in the golgi apparatus. Its function is as follows. Brassicaceae-specific phytocytokine (plant endogenous peptide released into the apoplast) perceived by MIK2 in a BAK1/SERK3 and SERK4 coreceptors-dependent manner, that modulates various physiological and antimicrobial processes including growth prevention and reactive oxygen species (ROS) response regulation. Inhibits root growth. This is Serine rich endogenous peptide 15 from Arabidopsis thaliana (Mouse-ear cress).